Consider the following 218-residue polypeptide: UPF0598 protein C8orf82 homolog (218 aa).

It belongs to the UPF0598 family.

This is UPF0598 protein C8orf82 homolog from Rattus norvegicus (Rat).